Reading from the N-terminus, the 395-residue chain is uncharacterized protein (395 aa).

Disordered stretches follow at residues 185 to 282 (RREV…SSTA) and 316 to 372 (GSST…TCSS). Over residues 248–257 (LHLRTRHPHR) the composition is skewed to basic residues. Positions 342 to 360 (ARASTHSRSSPSASANSRY) are enriched in low complexity.

This is an uncharacterized protein from Streptomyces fradiae (Streptomyces roseoflavus).